We begin with the raw amino-acid sequence, 237 residues long: tRNA (guanine-N(7)-)-methyltransferase (237 aa).

4 residues coordinate S-adenosyl-L-methionine: Glu-65, Glu-90, Asp-117, and Asp-140. The active site involves Asp-140. Residues Lys-144, Asp-176, and 212-215 (TKFE) each bind substrate. A disordered region spans residues 197-217 (TCGPRQFSPRGERPETKFERR). Positions 206-217 (RGERPETKFERR) are enriched in basic and acidic residues.

It belongs to the class I-like SAM-binding methyltransferase superfamily. TrmB family.

It catalyses the reaction guanosine(46) in tRNA + S-adenosyl-L-methionine = N(7)-methylguanosine(46) in tRNA + S-adenosyl-L-homocysteine. It functions in the pathway tRNA modification; N(7)-methylguanine-tRNA biosynthesis. Catalyzes the formation of N(7)-methylguanine at position 46 (m7G46) in tRNA. The polypeptide is tRNA (guanine-N(7)-)-methyltransferase (Alkalilimnicola ehrlichii (strain ATCC BAA-1101 / DSM 17681 / MLHE-1)).